Here is an 85-residue protein sequence, read N- to C-terminus: Translation initiation factor IF-1 2 (85 aa).

An S1-like domain is found at 1 to 72 (MAKEELIEMQ…TKGRITFRHL (72 aa)).

This sequence belongs to the IF-1 family. In terms of assembly, component of the 30S ribosomal translation pre-initiation complex which assembles on the 30S ribosome in the order IF-2 and IF-3, IF-1 and N-formylmethionyl-tRNA(fMet); mRNA recruitment can occur at any time during PIC assembly.

The protein resides in the cytoplasm. Its function is as follows. One of the essential components for the initiation of protein synthesis. Stabilizes the binding of IF-2 and IF-3 on the 30S subunit to which N-formylmethionyl-tRNA(fMet) subsequently binds. Helps modulate mRNA selection, yielding the 30S pre-initiation complex (PIC). Upon addition of the 50S ribosomal subunit IF-1, IF-2 and IF-3 are released leaving the mature 70S translation initiation complex. This Paracidovorax citrulli (strain AAC00-1) (Acidovorax citrulli) protein is Translation initiation factor IF-1 2.